We begin with the raw amino-acid sequence, 316 residues long: tRNA dimethylallyltransferase (316 aa).

17-24 is an ATP binding site; sequence GPTASGKT. Position 19 to 24 (19 to 24) interacts with substrate; sequence TASGKT. 3 interaction with substrate tRNA regions span residues 42–45, 166–170, and 247–252; these read DSAL, QRLSR, and RCVGYR.

It belongs to the IPP transferase family. Monomer. Mg(2+) serves as cofactor.

The catalysed reaction is adenosine(37) in tRNA + dimethylallyl diphosphate = N(6)-dimethylallyladenosine(37) in tRNA + diphosphate. Functionally, catalyzes the transfer of a dimethylallyl group onto the adenine at position 37 in tRNAs that read codons beginning with uridine, leading to the formation of N6-(dimethylallyl)adenosine (i(6)A). In Salmonella newport (strain SL254), this protein is tRNA dimethylallyltransferase.